A 297-amino-acid chain; its full sequence is tRNA dimethylallyltransferase (297 aa).

Residue 15 to 22 coordinates ATP; the sequence is GPTASGKS. Residue 17–22 coordinates substrate; the sequence is TASGKS. 2 interaction with substrate tRNA regions span residues 40-43 and 164-168; these read DSMQ and QRIVR.

The protein belongs to the IPP transferase family. In terms of assembly, monomer. The cofactor is Mg(2+).

The enzyme catalyses adenosine(37) in tRNA + dimethylallyl diphosphate = N(6)-dimethylallyladenosine(37) in tRNA + diphosphate. Its function is as follows. Catalyzes the transfer of a dimethylallyl group onto the adenine at position 37 in tRNAs that read codons beginning with uridine, leading to the formation of N6-(dimethylallyl)adenosine (i(6)A). The sequence is that of tRNA dimethylallyltransferase from Rhizobium johnstonii (strain DSM 114642 / LMG 32736 / 3841) (Rhizobium leguminosarum bv. viciae).